We begin with the raw amino-acid sequence, 248 residues long: Meiotically up-regulated gene 110 protein (248 aa).

A helical membrane pass occupies residues 23–43; it reads LRFVFWFSVLIPIFFIALIII.

It is found in the membrane. Functionally, has a role in meiosis. In Schizosaccharomyces pombe (strain 972 / ATCC 24843) (Fission yeast), this protein is Meiotically up-regulated gene 110 protein (mug110).